Here is a 377-residue protein sequence, read N- to C-terminus: Serine protease grass (377 aa).

Residues 1–26 form the signal peptide; that stretch reads MMIASSLAVLYGIAIVSSMGVQSARA. Residues 31–89 form the Clip domain; sequence DCTTPDGDQGQCMPFSSCRTIEERLTEAQKAGQKVPADYASYLQKALCGEFNGVRHFCC. 6 disulfides stabilise this stretch: cysteine 32/cysteine 88, cysteine 42/cysteine 78, cysteine 48/cysteine 89, cysteine 111/cysteine 243, cysteine 148/cysteine 164, and cysteine 188/cysteine 197. Residues 91-118 form a linker region; it reads SANIQHNSKVMSLFKDENFDCGNFLSQR. The 255-residue stretch at 119 to 373 folds into the Peptidase S1 domain; that stretch reads VSNGYEVKLS…YVQWITDTMA (255 aa). The active-site Charge relay system is histidine 163. The Ca(2+) site is built by glutamate 179, arginine 181, threonine 184, and aspartate 187. The active-site Charge relay system is aspartate 223. N-linked (GlcNAc...) asparagine glycosylation is found at asparagine 230 and asparagine 270. Cystine bridges form between cysteine 290–cysteine 304 and cysteine 314–cysteine 349. Serine 318 acts as the Charge relay system in catalysis.

It belongs to the peptidase S1 family. CLIP subfamily. Post-translationally, proteolytically cleaved by a tryspin-like protease which is likely to activate grass.

Its subcellular location is the secreted. In terms of biological role, endopeptidase. Plays a key role in innate immunity by activating the Toll pathway in response to fungal and Gram-positive bacterial infections, presumably downstream of pattern-recognition receptors (PRR), such as PGRP-SA, GNBP1 and GNBP3, and upstream of spz processing enzyme SPE. This is Serine protease grass from Drosophila melanogaster (Fruit fly).